Here is a 260-residue protein sequence, read N- to C-terminus: Dehydrogenase/reductase SDR family member 11 (260 aa).

The first 30 residues, 1 to 30, serve as a signal peptide directing secretion; it reads MTRAGMERWRDRLALVTGASGGIGAAVARA. NADP(+) contacts are provided by residues 18–23, 43–44, Glu49, 70–71, and Asn97; these read GASGGI, RT, and DL. Positions 151 and 166 each coordinate substrate. NADP(+) contacts are provided by residues Tyr166, Lys170, 201–204, and Lys208; that span reads VETQ. The Proton acceptor role is filled by Tyr166.

Belongs to the short-chain dehydrogenases/reductases (SDR) family. As to quaternary structure, homotetramer.

It is found in the secreted. The enzyme catalyses a 3beta-hydroxysteroid + NADP(+) = a 3-oxosteroid + NADPH + H(+). It carries out the reaction 17beta-estradiol + NAD(+) = estrone + NADH + H(+). The catalysed reaction is 17beta-estradiol + NADP(+) = estrone + NADPH + H(+). It participates in steroid biosynthesis; estrogen biosynthesis. With respect to regulation, inhibited by flavonoids including apigenin, luteolin, genistein, kaempferol and quercetin and also by carbenoxolone, zearalenone, glycyrrhetinic, curcumin and flufenamic acid. Functionally, catalyzes the conversion of the 17-keto group of estrone, 4- and 5-androstenes and 5-alpha-androstanes into their 17-beta-hydroxyl metabolites and the conversion of the 3-keto group of 3-, 3,17- and 3,20- diketosteroids into their 3-hydroxyl metabolites. Exhibits reductive 3-beta-hydroxysteroid dehydrogenase activity toward 5-beta-androstanes, 5-beta-pregnanes, 4-pregnenes and bile acids. May also reduce endogenous and exogenous alpha-dicarbonyl compounds and xenobiotic alicyclic ketones. The sequence is that of Dehydrogenase/reductase SDR family member 11 (Dhrs11) from Mus musculus (Mouse).